A 396-amino-acid chain; its full sequence is Elongation factor Tu 1 (396 aa).

One can recognise a tr-type G domain in the interval 10-206; it reads KPHVNVGTIG…ALDTYIPTPK (197 aa). A G1 region spans residues 19-26; the sequence is GHVDHGKT. Residue 19 to 26 participates in GTP binding; the sequence is GHVDHGKT. Threonine 26 contributes to the Mg(2+) binding site. Residues 60-64 are G2; it reads GITIS. Residues 81–84 form a G3 region; it reads DCPG. GTP contacts are provided by residues 81-85 and 136-139; these read DCPGH and NKAD. The segment at 136-139 is G4; it reads NKAD. The G5 stretch occupies residues 174-176; the sequence is SAL.

It belongs to the TRAFAC class translation factor GTPase superfamily. Classic translation factor GTPase family. EF-Tu/EF-1A subfamily. As to quaternary structure, monomer.

It is found in the cytoplasm. It catalyses the reaction GTP + H2O = GDP + phosphate + H(+). Its function is as follows. GTP hydrolase that promotes the GTP-dependent binding of aminoacyl-tRNA to the A-site of ribosomes during protein biosynthesis. This chain is Elongation factor Tu 1, found in Ruthia magnifica subsp. Calyptogena magnifica.